The chain runs to 353 residues: 3-ketosteroid-9-alpha-monooxygenase, ferredoxin reductase component (353 aa).

An FAD-binding FR-type domain is found at Ser8–Lys117. The 2Fe-2S ferredoxin-type domain occupies Ala264–Glu353. Cys300, Cys305, Cys308, and Cys338 together coordinate [2Fe-2S] cluster.

In terms of assembly, monomer. The two-component system 3-ketosteroid-9-alpha-monooxygenase is composed of an oxygenase component KshA and a reductase component KshB. Requires FAD as cofactor. It depends on [2Fe-2S] cluster as a cofactor.

The catalysed reaction is androsta-1,4-diene-3,17-dione + 2 reduced [2Fe-2S]-[ferredoxin] + O2 + 2 H(+) = 9alpha-hydroxyandrosta-1,4-diene-3,17-dione + 2 oxidized [2Fe-2S]-[ferredoxin] + H2O. It functions in the pathway lipid metabolism; steroid biosynthesis. Functionally, involved in the degradation of cholesterol. Catalyzes the introduction of a 9a-hydroxyl moiety into 1,4-androstadiene-3,17-dione (ADD) to yield the 9alpha-hydroxy-1,4-androstadiene-3,17-dione (9OHADD) intermediate which spontaneously form 3-hydroxy-9,10-seconandrost-1,3,5(10)-triene-9,17-dione (HSA) via the meta-cleavage of ring B with concomitant aromatization of ring A. The chain is 3-ketosteroid-9-alpha-monooxygenase, ferredoxin reductase component (kshB) from Mycolicibacterium smegmatis (strain ATCC 700084 / mc(2)155) (Mycobacterium smegmatis).